Reading from the N-terminus, the 156-residue chain is Ribosomal RNA large subunit methyltransferase H (156 aa).

Residues Leu-72, Gly-104, and 123–128 (LSEMTL) contribute to the S-adenosyl-L-methionine site.

It belongs to the RNA methyltransferase RlmH family. In terms of assembly, homodimer.

It is found in the cytoplasm. It catalyses the reaction pseudouridine(1915) in 23S rRNA + S-adenosyl-L-methionine = N(3)-methylpseudouridine(1915) in 23S rRNA + S-adenosyl-L-homocysteine + H(+). Specifically methylates the pseudouridine at position 1915 (m3Psi1915) in 23S rRNA. The protein is Ribosomal RNA large subunit methyltransferase H of Syntrophotalea carbinolica (strain DSM 2380 / NBRC 103641 / GraBd1) (Pelobacter carbinolicus).